An 836-amino-acid polypeptide reads, in one-letter code: Phenylalanine--tRNA ligase beta subunit (836 aa).

The region spanning proline 44–arginine 160 is the tRNA-binding domain. One can recognise a B5 domain in the interval proline 420–threonine 495. Aspartate 473, aspartate 479, glutamate 482, and glutamate 483 together coordinate Mg(2+). The FDX-ACB domain maps to serine 742–arginine 835.

This sequence belongs to the phenylalanyl-tRNA synthetase beta subunit family. Type 1 subfamily. As to quaternary structure, tetramer of two alpha and two beta subunits. Requires Mg(2+) as cofactor.

It is found in the cytoplasm. The enzyme catalyses tRNA(Phe) + L-phenylalanine + ATP = L-phenylalanyl-tRNA(Phe) + AMP + diphosphate + H(+). In Corynebacterium diphtheriae (strain ATCC 700971 / NCTC 13129 / Biotype gravis), this protein is Phenylalanine--tRNA ligase beta subunit.